A 254-amino-acid polypeptide reads, in one-letter code: Phosphoribosylaminoimidazole-succinocarboxamide synthase (254 aa).

This sequence belongs to the SAICAR synthetase family.

It carries out the reaction 5-amino-1-(5-phospho-D-ribosyl)imidazole-4-carboxylate + L-aspartate + ATP = (2S)-2-[5-amino-1-(5-phospho-beta-D-ribosyl)imidazole-4-carboxamido]succinate + ADP + phosphate + 2 H(+). It functions in the pathway purine metabolism; IMP biosynthesis via de novo pathway; 5-amino-1-(5-phospho-D-ribosyl)imidazole-4-carboxamide from 5-amino-1-(5-phospho-D-ribosyl)imidazole-4-carboxylate: step 1/2. This chain is Phosphoribosylaminoimidazole-succinocarboxamide synthase, found in Bartonella tribocorum (strain CIP 105476 / IBS 506).